A 440-amino-acid chain; its full sequence is Thymidine phosphorylase (440 aa).

It belongs to the thymidine/pyrimidine-nucleoside phosphorylase family. As to quaternary structure, homodimer.

The catalysed reaction is thymidine + phosphate = 2-deoxy-alpha-D-ribose 1-phosphate + thymine. The protein operates within pyrimidine metabolism; dTMP biosynthesis via salvage pathway; dTMP from thymine: step 1/2. Functionally, the enzymes which catalyze the reversible phosphorolysis of pyrimidine nucleosides are involved in the degradation of these compounds and in their utilization as carbon and energy sources, or in the rescue of pyrimidine bases for nucleotide synthesis. The protein is Thymidine phosphorylase of Yersinia enterocolitica serotype O:8 / biotype 1B (strain NCTC 13174 / 8081).